A 601-amino-acid polypeptide reads, in one-letter code: Glutamine--fructose-6-phosphate aminotransferase [isomerizing] (601 aa).

The active-site Nucleophile; for GATase activity is cysteine 2. Residues 2-218 enclose the Glutamine amidotransferase type-2 domain; the sequence is CGIVGYIGYD…DHEIVIVKKD (217 aa). 2 consecutive SIS domains span residues 284-423 and 453-591; these read IIND…EHGR and IATD…VDKP. Lysine 596 (for Fru-6P isomerization activity) is an active-site residue.

As to quaternary structure, homodimer.

It is found in the cytoplasm. The catalysed reaction is D-fructose 6-phosphate + L-glutamine = D-glucosamine 6-phosphate + L-glutamate. Catalyzes the first step in hexosamine metabolism, converting fructose-6P into glucosamine-6P using glutamine as a nitrogen source. The polypeptide is Glutamine--fructose-6-phosphate aminotransferase [isomerizing] (Staphylococcus aureus (strain MRSA252)).